Here is a 1258-residue protein sequence, read N- to C-terminus: uncharacterized protein (1258 aa).

The WD 1 repeat unit spans residues 55 to 93 (ELASEILGVCWQENGVLAAGISEGTWKRFLAGKQAINAE). Basic and acidic residues predominate over residues 112 to 128 (GGRTKERKDTGTSRQEK). The tract at residues 112–138 (GGRTKERKDTGTSRQEKFLSSSHPHTD) is disordered. WD repeat units follow at residues 640-679 (ETLGNILSAAFSPEGQLLATCDTDCHVRVWEVKSGKLLLI), 682-721 (GHSNWVRFVVFSPDGEILASCGADENVKLWSVRDGVCIKT), 724-763 (GHEHEVFSVAFHPDGETLASASGDKTIKLWDIQDGTCLQT), 766-807 (GHTD…RTLK), 809-849 (HTGW…KTYI), 850-889 (GHTNSVYSIAYSPDSKILVSGSGDRTIKLWDCQTHICIKT), 892-931 (GHTNEVCSVAFSPDGQTLACVSLDQSVRLWNCRTGQCLKA), 934-975 (GNTD…SSLE), 976-1017 (GHTD…QILL), 1019-1059 (HTDW…KTLS), 1060-1101 (EHSD…GILR), 1103-1143 (HSNR…KTLT), 1144-1183 (GHTNWVFDIAFSPDGKILASASHDQTVRIWDVNTGKCHHI), and 1186-1227 (GHTH…QILR).

This is an uncharacterized protein from Nostoc sp. (strain PCC 7120 / SAG 25.82 / UTEX 2576).